Consider the following 203-residue polypeptide: E3 ubiquitin-protein ligase RNF152 (203 aa).

Residues 12–55 (CQICFNYYSPRRRPKLLDCKHTCCSVCLQQMRTSQKDVRCPWCR) form an RING-type zinc finger. The necessary for interaction with RRAGA stretch occupies residues 106 to 165 (ISKERALLPGDMGCRLLPGSQQKSVTVVTIPAEQQPLQGGAPQEAVEEEQDRRGVVKSST). Residues 167-187 (SGVCTVILVACVLVFLLGIVL) form a helical membrane-spanning segment.

This sequence belongs to the RNF152 family. As to quaternary structure, interacts with RRAGA (inactive GDP-bound form); stimulated by amino acid starvation. Interacts with SEC16A. Ubiquitinated. Autoubiquitinated in vitro, leading to its degradation by the proteasome. In terms of tissue distribution, widely expressed.

It is found in the lysosome membrane. It carries out the reaction S-ubiquitinyl-[E2 ubiquitin-conjugating enzyme]-L-cysteine + [acceptor protein]-L-lysine = [E2 ubiquitin-conjugating enzyme]-L-cysteine + N(6)-ubiquitinyl-[acceptor protein]-L-lysine.. It participates in protein modification; protein ubiquitination. E3 ubiquitin-protein ligase that acts as a negative regulator of mTORC1 signaling by mediating ubiquitination of RagA/RRAGA and RHEB. Catalyzes 'Lys-63'-linked polyubiquitination of RagA/RRAGA in response to amino acid starvation, thereby regulating mTORC1 signaling. Also mediates monoubiquitination of RHEB, promoting its association with the TSC-TBC complex and subsequent inhibition. Also mediates 'Lys-48'-linked polyubiquitination of target proteins and their subsequent targeting to the proteasome for degradation. Induces apoptosis when overexpressed. This is E3 ubiquitin-protein ligase RNF152 from Homo sapiens (Human).